Here is a 616-residue protein sequence, read N- to C-terminus: Carboxylic acid transporter protein homolog (616 aa).

A compositionally biased stretch (basic and acidic residues) spans 1–11; the sequence is MSSSITDEKIS. The disordered stretch occupies residues 1-65; sequence MSSSITDEKI…LYHNPSLPAQ (65 aa). Serine 2 is subject to N-acetylserine. The Cytoplasmic portion of the chain corresponds to 2-140; sequence SSSITDEKIS…LRKMTWQNWN (139 aa). Position 4 is a phosphoserine (serine 4). Lysine 9 is covalently cross-linked (Glycyl lysine isopeptide (Lys-Gly) (interchain with G-Cter in ubiquitin)). Phosphoserine is present on residues serine 11, serine 61, and serine 66. Threonine 70 carries the phosphothreonine modification. Residues 141–161 traverse the membrane as a helical segment; sequence YFFMGYFAWLSAAWAFFCVSV. Over 162–176 the chain is Extracellular; it reads SVAPLAELYDRPTKD. A helical transmembrane segment spans residues 177–197; that stretch reads ITWGLGLVLFVRSAGAVIFGL. The Cytoplasmic segment spans residues 198-205; sequence WTDKSSRK. The helical transmembrane segment at 206–226 threads the bilayer; it reads WPYITCLFLFVIAQLCTPWCD. Residues 227 to 230 lie on the Extracellular side of the membrane; sequence TYEK. Residues 231-251 traverse the membrane as a helical segment; the sequence is FLGVRWITGIAMGGIYGCASA. Residues 252–263 are Cytoplasmic-facing; it reads TAIEDAPVKARS. The helical transmembrane segment at 264–284 threads the bilayer; sequence FLSGLFFSAYAMGFIFAIIFY. Residues 285-296 are Extracellular-facing; it reads RAFGYFRDDGWK. The helical transmembrane segment at 297–317 threads the bilayer; the sequence is ILFWFSIFLPILLIFWRLLWP. Over 318–363 the chain is Cytoplasmic; that stretch reads ETKYFTKVLKARKLILSDAVKANGGEPLPKANFKQKMVSMKRTVQK. A Glycyl lysine isopeptide (Lys-Gly) (interchain with G-Cter in ubiquitin) cross-link involves residue lysine 338. Residues 364 to 384 form a helical membrane-spanning segment; that stretch reads YWLLFAYLVVLLVGPNYLTHA. Topologically, residues 385 to 402 are extracellular; sequence SQDLLPTMLRAQLGLSKD. Residues 403–423 traverse the membrane as a helical segment; the sequence is AVTVIVVVTNIGAICGGMIFG. At 424 to 432 the chain is on the cytoplasmic side; that stretch reads QFMEVTGRR. The helical transmembrane segment at 433-453 threads the bilayer; it reads LGLLIACTMGGCFTYPAFMLR. Over 454-457 the chain is Extracellular; the sequence is SEKA. A helical transmembrane segment spans residues 458–478; sequence ILGAGFMLYFCVFGVWGILPI. Residues 479–489 lie on the Cytoplasmic side of the membrane; the sequence is HLAELAPADAR. A helical transmembrane segment spans residues 490-510; the sequence is ALVAGLSYQLGNLASAAASTI. At 511–535 the chain is on the extracellular side; it reads ETQLADRYPLERDASGAVIKEDYAK. A helical membrane pass occupies residues 536-556; the sequence is VMAILTGSVFIFTFACVFVGH. Residues 557–616 are Cytoplasmic-facing; sequence EKFHRDLSSPVMKKYINQVEEYEADGLSISDIVEQKTECASVKMIDSNVSKTYEEHIETV. Residues serine 584, serine 603, and serine 606 each carry the phosphoserine modification.

It belongs to the major facilitator superfamily. Sugar transporter (TC 2.A.1.1) family.

The protein resides in the membrane. Functionally, essential to lactate transport. The polypeptide is Carboxylic acid transporter protein homolog (JEN1) (Saccharomyces cerevisiae (strain ATCC 204508 / S288c) (Baker's yeast)).